Here is a 1058-residue protein sequence, read N- to C-terminus: SMC5-SMC6 complex localization factor protein 1 (1058 aa).

BRCT domains are found at residues Met-12–Ala-77 and Gly-119–Leu-196. Residues Pro-410–Ser-1058 form an NSE5-like domain; mediates interaction with SLF2 region. ANK repeat units follow at residues Lys-806 to Val-836, Ala-840 to Leu-869, and Asp-874 to Leu-903. Residue Lys-931 forms a Glycyl lysine isopeptide (Lys-Gly) (interchain with G-Cter in SUMO2) linkage.

In terms of assembly, interacts (via N-terminus) with SLF2; this interaction links RAD18 to the SMC5-SMC6 complex. Interacts (via BRCT domains) with RAD18; this interaction occurs in a SLF2-independent manner. Interacts with SMC6. Interacts (via BRCT domains) with RAD18 (via C-terminus and phosphorylated form); this interaction is required for efficient repair of UV-induced DNA damage.

It localises to the nucleus. The protein resides in the cytoplasm. The protein localises to the cytoskeleton. It is found in the microtubule organizing center. Its subcellular location is the centrosome. In terms of biological role, plays a role in the DNA damage response (DDR) pathway by regulating postreplication repair of UV-damaged DNA and genomic stability maintenance. The SLF1-SLF2 complex acts to link RAD18 with the SMC5-SMC6 complex at replication-coupled interstrand cross-links (ICL) and DNA double-strand breaks (DSBs) sites on chromatin during DNA repair in response to stalled replication forks. Promotes the recruitment of SLF2 and the SMC5-SMC6 complex to DNA lesions. The protein is SMC5-SMC6 complex localization factor protein 1 of Homo sapiens (Human).